A 183-amino-acid chain; its full sequence is tRNA-splicing endonuclease (183 aa).

Active-site residues include tyrosine 120, histidine 128, and lysine 159.

It belongs to the tRNA-intron endonuclease family. Archaeal short subfamily. Homotetramer; although the tetramer contains four active sites, only two participate in the cleavage. Therefore, it should be considered as a dimer of dimers.

It catalyses the reaction pretRNA = a 3'-half-tRNA molecule with a 5'-OH end + a 5'-half-tRNA molecule with a 2',3'-cyclic phosphate end + an intron with a 2',3'-cyclic phosphate and a 5'-hydroxyl terminus.. Functionally, endonuclease that removes tRNA introns. Cleaves pre-tRNA at the 5'- and 3'-splice sites to release the intron. The products are an intron and two tRNA half-molecules bearing 2',3' cyclic phosphate and 5'-OH termini. Recognizes a pseudosymmetric substrate in which 2 bulged loops of 3 bases are separated by a stem of 4 bp. This chain is tRNA-splicing endonuclease, found in Pyrobaculum arsenaticum (strain DSM 13514 / JCM 11321 / PZ6).